The sequence spans 417 residues: Pigment epithelium-derived factor (417 aa).

The N-terminal stretch at 1–19 (MQALVLLLWTGALLGHGSS) is a signal peptide. Positions 17–41 (GSSQNVPSSSEGSPVPDSTGEPVEE) are disordered. Over residues 18–28 (SSQNVPSSSEG) the composition is skewed to polar residues. Glutamine 20 carries the pyrrolidone carboxylic acid modification. Serine 24 carries the post-translational modification Phosphoserine. Asparagine 284 carries N-linked (GlcNAc...) asparagine glycosylation.

Belongs to the serpin family. In terms of assembly, interacts with PNPLA2; this interaction stimulates the phospholipase A2 activity of PNPLA2. As to expression, highly expressed in the liver, gastric glandular mucosa and renal tubules. It is also expressed in the brain, heart, lung retina and testes.

Its subcellular location is the secreted. The protein resides in the melanosome. Functionally, neurotrophic protein; induces extensive neuronal differentiation in retinoblastoma cells. Potent inhibitor of angiogenesis. As it does not undergo the S (stressed) to R (relaxed) conformational transition characteristic of active serpins, it exhibits no serine protease inhibitory activity. This Mus musculus (Mouse) protein is Pigment epithelium-derived factor (Serpinf1).